The following is a 67-amino-acid chain: DNA gyrase inhibitor YacG (67 aa).

Zn(2+)-binding residues include C10, C13, C29, and C33. Residues 44 to 57 show a composition bias toward basic and acidic residues; it reads EEKRIPSSGDRSDT. A disordered region spans residues 44 to 67; the sequence is EEKRIPSSGDRSDTDGWSEEENQP.

This sequence belongs to the DNA gyrase inhibitor YacG family. Interacts with GyrB. Requires Zn(2+) as cofactor.

In terms of biological role, inhibits all the catalytic activities of DNA gyrase by preventing its interaction with DNA. Acts by binding directly to the C-terminal domain of GyrB, which probably disrupts DNA binding by the gyrase. This chain is DNA gyrase inhibitor YacG, found in Cronobacter sakazakii (strain ATCC BAA-894) (Enterobacter sakazakii).